Here is a 248-residue protein sequence, read N- to C-terminus: DNA repair protein RecO (248 aa).

Belongs to the RecO family.

Involved in DNA repair and RecF pathway recombination. The chain is DNA repair protein RecO from Bacillus cereus (strain 03BB102).